The chain runs to 215 residues: Vesicle-trafficking protein SEC22b-A (215 aa).

Topologically, residues 1–190 are cytoplasmic; that stretch reads MVLQTMIVRV…RSDAKYLNTR (190 aa). Residues 6–119 form the Longin domain; the sequence is MIVRVADSLP…YSFIEFDTYI (114 aa). Positions 134–194 constitute a v-SNARE coiled-coil homology domain; it reads NLGNINSELH…KYLNTRSTYA (61 aa). A helical membrane pass occupies residues 191–213; that stretch reads STYAKVAAGAVIIITLIIYVRFW. Over 214–215 the chain is Lumenal; the sequence is WL.

It belongs to the synaptobrevin family. As to quaternary structure, component of 2 distinct SNARE complexes.

The protein resides in the endoplasmic reticulum membrane. Its subcellular location is the endoplasmic reticulum-Golgi intermediate compartment membrane. The protein localises to the golgi apparatus. It localises to the cis-Golgi network membrane. It is found in the trans-Golgi network membrane. The protein resides in the melanosome. Functionally, SNARE involved in targeting and fusion of ER-derived transport vesicles with the Golgi complex as well as Golgi-derived retrograde transport vesicles with the ER. This is Vesicle-trafficking protein SEC22b-A from Danio rerio (Zebrafish).